The sequence spans 659 residues: Pollen receptor-like kinase 6 (659 aa).

The signal sequence occupies residues 1–26 (MAAAVLNPGFFLLILLLSFSISPSLQ). Residues 27-266 (YVSESEPLVR…SVPETSNKAA (240 aa)) are Extracellular-facing. A disulfide bridge links cysteine 58 with cysteine 67. LRR repeat units follow at residues 95–118 (LPNL…FFKL), 120–142 (GLKS…FFKD), 143–167 (MSKL…ITQL), 168–190 (PQLE…EFGS), and 192–214 (KNLK…SIAD). N-linked (GlcNAc...) asparagine glycosylation occurs at asparagine 128. Asparagine 179 is a glycosylation site (N-linked (GlcNAc...) asparagine). The N-linked (GlcNAc...) asparagine glycan is linked to asparagine 221. An LURE peptides binding region spans residues 226–242 (EYLCGPVVDVGCENIEL). The cysteines at positions 229 and 237 are disulfide-linked. The segment at 241–260 (ELNDPQEGQPPSKPSSSVPE) is disordered. The helical transmembrane segment at 267 to 287 (INAIMVSISLLLLFFIIVGVI) threads the bilayer. Residues 288 to 659 (KRRNKKKNPD…AVRRIEQVKT (372 aa)) are Cytoplasmic-facing. A disordered region spans residues 312 to 354 (VRISESSSTTAKRSTDSSRKRGGHSDDGSTKKGVSNIGKGGNG). The segment covering 324–341 (RSTDSSRKRGGHSDDGST) has biased composition (basic and acidic residues). Positions 384–659 (KAAAEVLGNG…AVRRIEQVKT (276 aa)) constitute a Protein kinase domain. ATP is bound by residues 390–398 (LGNGSLGSA) and lysine 412. Serine 464 is modified (phosphoserine). Threonine 484 and threonine 557 each carry phosphothreonine. The residue at position 561 (serine 561) is a Phosphoserine.

It belongs to the protein kinase superfamily. Ser/Thr protein kinase family. Interacts with ROPGEF8, ROPGEF9, ROPGEF12, ROPGEF13, PRK3, LIP1 and LIP2. Binds to LURE peptides via its LRR repeats; interacts with LURE1.1, LURE1.2, LURE1.3 and LURE1.4. In terms of tissue distribution, expressed specifically in the pollen tube, predominantly at the tip.

Its subcellular location is the cell membrane. The protein resides in the cytoplasmic granule. Functionally, key receptor for sensing species-specific attractants in cooperation with other pollen receptor-like kinases. Essential for pollen tube reorientation toward attractant peptides. The protein is Pollen receptor-like kinase 6 of Arabidopsis thaliana (Mouse-ear cress).